We begin with the raw amino-acid sequence, 271 residues long: Murein DD-endopeptidase MepH (271 aa).

The signal sequence occupies residues 1 to 27 (MARINRISITLCALLFTTLPLTPMAHA). Residues 27–102 (ASKQARESSA…KHAVNKTASA (76 aa)) are disordered. Residues 55–64 (KTQKTAKKAA) are compositionally biased toward basic residues. The segment covering 65–86 (SKSTTKSKTASSVKKSSITASK) has biased composition (low complexity). The 128-residue stretch at 138–265 (QKATKVAMNK…RHYVGARRVM (128 aa)) folds into the NlpC/P60 domain. Cysteine 169 acts as the Nucleophile in catalysis. Residue histidine 224 is the Proton acceptor of the active site. Glutamine 236 is a catalytic residue.

It belongs to the peptidase C40 family.

It functions in the pathway cell wall biogenesis; cell wall polysaccharide biosynthesis. Its function is as follows. A murein DD-endopeptidase with specificity for D-Ala-meso-diaminopimelic acid (mDAP) cross-links. Its role is probably to cleave D-Ala-mDAP cross-links to allow insertion of new glycans and thus cell wall expansion. Functionally redundant with MepM and MepH. Partially suppresses an mepS disruption mutant. This is Murein DD-endopeptidase MepH (mepH) from Escherichia coli (strain K12).